A 101-amino-acid polypeptide reads, in one-letter code: Small ribosomal subunit protein uS14 (101 aa).

The protein belongs to the universal ribosomal protein uS14 family. In terms of assembly, part of the 30S ribosomal subunit. Contacts proteins S3 and S10.

Its function is as follows. Binds 16S rRNA, required for the assembly of 30S particles and may also be responsible for determining the conformation of the 16S rRNA at the A site. The sequence is that of Small ribosomal subunit protein uS14 from Paraburkholderia phytofirmans (strain DSM 17436 / LMG 22146 / PsJN) (Burkholderia phytofirmans).